A 516-amino-acid polypeptide reads, in one-letter code: GMP synthase [glutamine-hydrolyzing] (516 aa).

A Glutamine amidotransferase type-1 domain is found at 8-198; that stretch reads KILILDFGSQ…VVNICGCDTL (191 aa). C84 serves as the catalytic Nucleophile. Residues H172 and E174 contribute to the active site. In terms of domain architecture, GMPS ATP-PPase spans 199 to 391; sequence WNIENIIEND…LGLPYNMLYR (193 aa). Residue 226–232 coordinates ATP; the sequence is SGGVDSS.

In terms of assembly, homodimer.

It carries out the reaction XMP + L-glutamine + ATP + H2O = GMP + L-glutamate + AMP + diphosphate + 2 H(+). Its pathway is purine metabolism; GMP biosynthesis; GMP from XMP (L-Gln route): step 1/1. Catalyzes the synthesis of GMP from XMP. In Francisella tularensis subsp. novicida (strain U112), this protein is GMP synthase [glutamine-hydrolyzing].